Here is a 122-residue protein sequence, read N- to C-terminus: uncharacterized protein (122 aa).

This is an uncharacterized protein from Acidianus sp. F28 (AFV-2).